A 131-amino-acid polypeptide reads, in one-letter code: Small nuclear ribonucleoprotein SmD3b (131 aa).

The Sm domain occupies 7–79; the sequence is IPVKLLHEAS…VRFMVIPDIL (73 aa). Residues 96-131 form a disordered region; that stretch reads SSSLGVGRGRGAMRGKPAAGPGRGTGGRGAVPPVRR.

This sequence belongs to the snRNP core protein family. Expressed in young seedlings, roots, leaves, flowers and immature siliques.

It is found in the cytoplasm. The protein resides in the cytosol. It localises to the nucleus. Core component of the spliceosomal U1, U2, U4 and U5 small nuclear ribonucleoproteins (snRNPs), the building blocks of the spliceosome. May play a major role in the splicing of cellular pre-mRNAs. Required for normal plant development. The sequence is that of Small nuclear ribonucleoprotein SmD3b from Arabidopsis thaliana (Mouse-ear cress).